Reading from the N-terminus, the 219-residue chain is ATP-dependent dethiobiotin synthetase BioD (219 aa).

12-17 lines the ATP pocket; sequence DLGKTH. Residue T16 participates in Mg(2+) binding. K37 is an active-site residue. Residue S41 coordinates substrate. Residues D52, 115–118, and 175–176 contribute to the ATP site; these read EGAG and SE. D52 and E115 together coordinate Mg(2+).

The protein belongs to the dethiobiotin synthetase family. As to quaternary structure, homodimer. It depends on Mg(2+) as a cofactor.

The protein localises to the cytoplasm. The enzyme catalyses (7R,8S)-7,8-diammoniononanoate + CO2 + ATP = (4R,5S)-dethiobiotin + ADP + phosphate + 3 H(+). The protein operates within cofactor biosynthesis; biotin biosynthesis; biotin from 7,8-diaminononanoate: step 1/2. Its function is as follows. Catalyzes a mechanistically unusual reaction, the ATP-dependent insertion of CO2 between the N7 and N8 nitrogen atoms of 7,8-diaminopelargonic acid (DAPA, also called 7,8-diammoniononanoate) to form a ureido ring. In Caulobacter vibrioides (strain ATCC 19089 / CIP 103742 / CB 15) (Caulobacter crescentus), this protein is ATP-dependent dethiobiotin synthetase BioD.